The chain runs to 255 residues: 2-succinyl-6-hydroxy-2,4-cyclohexadiene-1-carboxylate synthase (255 aa).

This sequence belongs to the AB hydrolase superfamily. MenH family. Monomer.

The enzyme catalyses 5-enolpyruvoyl-6-hydroxy-2-succinyl-cyclohex-3-ene-1-carboxylate = (1R,6R)-6-hydroxy-2-succinyl-cyclohexa-2,4-diene-1-carboxylate + pyruvate. It functions in the pathway quinol/quinone metabolism; 1,4-dihydroxy-2-naphthoate biosynthesis; 1,4-dihydroxy-2-naphthoate from chorismate: step 3/7. Its pathway is quinol/quinone metabolism; menaquinone biosynthesis. Its function is as follows. Catalyzes a proton abstraction reaction that results in 2,5-elimination of pyruvate from 2-succinyl-5-enolpyruvyl-6-hydroxy-3-cyclohexene-1-carboxylate (SEPHCHC) and the formation of 2-succinyl-6-hydroxy-2,4-cyclohexadiene-1-carboxylate (SHCHC). This is 2-succinyl-6-hydroxy-2,4-cyclohexadiene-1-carboxylate synthase from Serratia proteamaculans (strain 568).